Here is a 216-residue protein sequence, read N- to C-terminus: MTRVLITGFAPFGGERVNPSWQAASLVAAEPPAGLAVTAAELPCVFGESLDALRDAIRADNPDLVLCLGQAGGRPGVTVERVGINVDDARIPDNAGGQPIDEPVVPDGPAAYFSTLPVKACVAAMREAGVPAAVSNTAGTFVCNHVAYGLGHLIATEFPHLRGGFAHVPWAPEQVPDGTAPALPPATVAHGLRALLAAAARTPAEQDLKVTEGATH.

Active-site residues include Glu-80, Cys-143, and His-167.

Belongs to the peptidase C15 family. As to quaternary structure, homotetramer.

It localises to the cytoplasm. The enzyme catalyses Release of an N-terminal pyroglutamyl group from a polypeptide, the second amino acid generally not being Pro.. Its function is as follows. Removes 5-oxoproline from various penultimate amino acid residues except L-proline. The polypeptide is Pyrrolidone-carboxylate peptidase (pcp) (Streptomyces coelicolor (strain ATCC BAA-471 / A3(2) / M145)).